A 901-amino-acid polypeptide reads, in one-letter code: Core protein VP3 (901 aa).

Belongs to the orbivirus VP3 family.

The protein resides in the virion. The VP3 protein is one of the five proteins (with VP1, VP4, VP6 and VP7) which form the inner capsid of the virus. The protein is Core protein VP3 (Segment-3) of Antilocapra americana (Pronghorn).